The sequence spans 382 residues: Lysophosphatidylserine lipase ABHD12 (382 aa).

Over residues 1–12 (MRKRKGSADHDS) the composition is skewed to basic and acidic residues. The tract at residues 1–45 (MRKRKGSADHDSSFTATLTDGSSDLKQCHKGTDADTDPGGSGKEM) is disordered. At 1–60 (MRKRKGSADHDSSFTATLTDGSSDLKQCHKGTDADTDPGGSGKEMGRRCRRGGLMWRLRR) the chain is on the cytoplasmic side. Over residues 13 to 25 (SFTATLTDGSSDL) the composition is skewed to polar residues. The helical transmembrane segment at 61-81 (ILIWLLGIYIAIPVIIKVCPS) threads the bilayer. Residues 82 to 382 (IQAKLVFLNF…DFLRAPHPHG (301 aa)) lie on the Extracellular side of the membrane. N-linked (GlcNAc...) asparagine glycosylation occurs at asparagine 109. The Nucleophile role is filled by serine 232. Residues aspartate 319 and histidine 358 each act as charge relay system in the active site.

This sequence belongs to the serine esterase family. As to expression, ubiquitously expressed in adult tissues.

It localises to the endoplasmic reticulum membrane. The catalysed reaction is 1-(9Z-octadecenoyl)-sn-glycero-3-phospho-L-serine + H2O = sn-glycero-3-phospho-L-serine + (9Z)-octadecenoate + H(+). It catalyses the reaction 1-(9Z-octadecenoyl)-sn-glycero-3-phospho-(1'-sn-glycerol) + H2O = sn-glycero-3-phospho-(1'-sn-glycerol) + (9Z)-octadecenoate + H(+). The enzyme catalyses 1-(9Z-octadecenoyl)-sn-glycero-3-phospho-(1D-myo-inositol) + H2O = sn-glycero-3-phospho-1D-myo-inositol + (9Z)-octadecenoate + H(+). It carries out the reaction 1-(9Z-octadecenoyl)-sn-glycero-3-phosphoethanolamine + H2O = sn-glycero-3-phosphoethanolamine + (9Z)-octadecenoate + H(+). The catalysed reaction is 1-(9Z-octadecenoyl)-sn-glycero-3-phosphocholine + H2O = 1-(9Z-octadecenoyl)-sn-glycerol + phosphocholine + H(+). It catalyses the reaction 2-(9Z-octadecenoyl)-glycerol + H2O = glycerol + (9Z)-octadecenoate + H(+). The enzyme catalyses 1-hexadecanoyl-sn-glycero-3-phospho-L-serine + H2O = sn-glycero-3-phospho-L-serine + hexadecanoate + H(+). It carries out the reaction 2-(5Z,8Z,11Z,14Z-eicosatetraenoyl)-glycerol + H2O = glycerol + (5Z,8Z,11Z,14Z)-eicosatetraenoate + H(+). The catalysed reaction is Hydrolyzes glycerol monoesters of long-chain fatty acids.. It catalyses the reaction 1-decanoylglycerol + H2O = decanoate + glycerol + H(+). The enzyme catalyses 1-dodecanoylglycerol + H2O = dodecanoate + glycerol + H(+). It carries out the reaction 1-tetradecanoylglycerol + H2O = tetradecanoate + glycerol + H(+). The catalysed reaction is 2-hexadecanoylglycerol + H2O = glycerol + hexadecanoate + H(+). It catalyses the reaction 1-(9Z-octadecenoyl)-glycerol + H2O = glycerol + (9Z)-octadecenoate + H(+). The enzyme catalyses 2-(9Z,12Z-octadecadienoyl)-glycerol + H2O = (9Z,12Z)-octadecadienoate + glycerol + H(+). It carries out the reaction 1-(5Z,8Z,11Z,14Z-eicosatetraenoyl)-glycerol + H2O = glycerol + (5Z,8Z,11Z,14Z)-eicosatetraenoate + H(+). The catalysed reaction is 1-(9Z,12Z-octadecadienoyl)-glycerol + H2O = (9Z,12Z)-octadecadienoate + glycerol + H(+). It catalyses the reaction 1-hexadecanoylglycerol + H2O = glycerol + hexadecanoate + H(+). The enzyme catalyses 1-octadecanoylglycerol + H2O = octadecanoate + glycerol + H(+). It carries out the reaction 1-octadecanoyl-2-(9,10-epoxyoctadecanoyl)-sn-glycero-3-phospho-L-serine + H2O = 9,10-epoxyoctadecanoate + 1-octadecanoyl-sn-glycero-3-phosphoserine + H(+). The catalysed reaction is 1-octadecanoyl-2-(10-hydroxyoctadecanoyl)-sn-glycero-3-phospho-L-serine + H2O = 1-octadecanoyl-sn-glycero-3-phosphoserine + 10-hydroxyoctadecanoate + H(+). It catalyses the reaction 1-hexadecanoyl-2-(10-hydroxyoctadecanoyl)-sn-glycero-3-phospho-L-serine + H2O = 10-hydroxyoctadecanoate + 1-hexadecanoyl-sn-glycero-3-phospho-L-serine + H(+). Lysophosphatidylserine (LPS) lipase that mediates the hydrolysis of lysophosphatidylserine, a class of signaling lipids that regulates immunological and neurological processes. Represents a major lysophosphatidylserine lipase in the brain, thereby playing a key role in the central nervous system. Also able to hydrolyze oxidized phosphatidylserine; oxidized phosphatidylserine is produced in response to severe inflammatory stress and constitutes a proapoptotic 'eat me' signal. Also has monoacylglycerol (MAG) lipase activity: hydrolyzes 2-arachidonoylglycerol (2-AG), thereby acting as a regulator of endocannabinoid signaling pathways. Has a strong preference for very-long-chain lipid substrates; substrate specificity is likely due to improved catalysis and not improved substrate binding. The polypeptide is Lysophosphatidylserine lipase ABHD12 (Danio rerio (Zebrafish)).